The primary structure comprises 361 residues: Holliday junction branch migration complex subunit RuvB (361 aa).

2 stretches are compositionally biased toward basic and acidic residues: residues methionine 1–glutamate 13 and glutamine 33–arginine 43. Residues methionine 1–arginine 43 are disordered. Positions serine 2 to tyrosine 203 are large ATPase domain (RuvB-L). ATP is bound by residues leucine 42, arginine 43, glycine 84, lysine 87, threonine 88, threonine 89, glutamate 150–phenylalanine 152, arginine 193, tyrosine 203, and arginine 240. Residue threonine 88 participates in Mg(2+) binding. The segment at aspartate 204 to aspartate 274 is small ATPAse domain (RuvB-S). A head domain (RuvB-H) region spans residues glutamate 277–phenylalanine 361. 2 residues coordinate DNA: arginine 332 and arginine 337.

The protein belongs to the RuvB family. Homohexamer. Forms an RuvA(8)-RuvB(12)-Holliday junction (HJ) complex. HJ DNA is sandwiched between 2 RuvA tetramers; dsDNA enters through RuvA and exits via RuvB. An RuvB hexamer assembles on each DNA strand where it exits the tetramer. Each RuvB hexamer is contacted by two RuvA subunits (via domain III) on 2 adjacent RuvB subunits; this complex drives branch migration. In the full resolvosome a probable DNA-RuvA(4)-RuvB(12)-RuvC(2) complex forms which resolves the HJ.

Its subcellular location is the cytoplasm. It carries out the reaction ATP + H2O = ADP + phosphate + H(+). In terms of biological role, the RuvA-RuvB-RuvC complex processes Holliday junction (HJ) DNA during genetic recombination and DNA repair, while the RuvA-RuvB complex plays an important role in the rescue of blocked DNA replication forks via replication fork reversal (RFR). RuvA specifically binds to HJ cruciform DNA, conferring on it an open structure. The RuvB hexamer acts as an ATP-dependent pump, pulling dsDNA into and through the RuvAB complex. RuvB forms 2 homohexamers on either side of HJ DNA bound by 1 or 2 RuvA tetramers; 4 subunits per hexamer contact DNA at a time. Coordinated motions by a converter formed by DNA-disengaged RuvB subunits stimulates ATP hydrolysis and nucleotide exchange. Immobilization of the converter enables RuvB to convert the ATP-contained energy into a lever motion, pulling 2 nucleotides of DNA out of the RuvA tetramer per ATP hydrolyzed, thus driving DNA branch migration. The RuvB motors rotate together with the DNA substrate, which together with the progressing nucleotide cycle form the mechanistic basis for DNA recombination by continuous HJ branch migration. Branch migration allows RuvC to scan DNA until it finds its consensus sequence, where it cleaves and resolves cruciform DNA. This chain is Holliday junction branch migration complex subunit RuvB, found in Corynebacterium aurimucosum (strain ATCC 700975 / DSM 44827 / CIP 107346 / CN-1) (Corynebacterium nigricans).